Consider the following 229-residue polypeptide: Trypsin (229 aa).

Positions 1 to 7 (APDDDDK) are cleaved as a propeptide — activation peptide. One can recognise a Peptidase S1 domain in the interval 8–227 (IVGGYECPKH…YVSWIHETIA (220 aa)). Intrachain disulfides connect Cys-14-Cys-143, Cys-32-Cys-48, Cys-116-Cys-216, Cys-123-Cys-189, Cys-154-Cys-168, and Cys-179-Cys-203. Catalysis depends on His-47, which acts as the Charge relay system. Residues Glu-59 and Glu-69 each contribute to the Ca(2+) site. The Charge relay system role is filled by Asp-91. The active-site Charge relay system is Ser-183.

The protein belongs to the peptidase S1 family. Ca(2+) is required as a cofactor.

It localises to the secreted. The protein localises to the extracellular space. It catalyses the reaction Preferential cleavage: Arg-|-Xaa, Lys-|-Xaa.. This Squalus acanthias (Spiny dogfish) protein is Trypsin.